The primary structure comprises 557 residues: MRISRERYFELYGPTEGDKIRLGDTNLYITIEKDLIAKGDELVFGAGKTARDGLGLLPNVREEEVMDLIITNVVILDPLLGVIKADIGIKDGLIVGIGHGGNPFTMDGVNFVLGSSTEIISGEGLIATPGFIDTHIHWVAPQQVFDALSAGFTTLIGGGTGPAEGTKATTVTPGSWNIKIIAESLDYFPLNFALTAKGSSSRITMEEVLRNGASGFKIHEDWGAMPRVIDETLTVADEYDVQVTIHTDTSNESGYLEDTLNAINGRTIHAYHVEGAGGGHAPDIIKICAEPNVLPSSTNPTKPYTIHTYEEHLEMLMAVHHLNPKVPEDVAYAESRIREETMMAEDYLHDLGAISMMSSDSQAMGRVGETGIRTFQLAHKMKDLGLIQINDNERVLRYLAKITINPAITHGISDYVGTLAPGHIADIVLWDPRFFPVKPYMVIKGGAITWALMGDTNASIAYAQPVLYKPMFGYYSAKSVSFFFSATDGVENLSKIVRRRVLPVKNTRHLTKKDMKYNDILPKIEVNPDTYEVKINGIVPKVPPSKSLPLTQLYFIY.

In terms of domain architecture, Urease spans 130-557; it reads GFIDTHIHWV…LPLTQLYFIY (428 aa). The Ni(2+) site is built by histidine 135, histidine 137, and lysine 217. An N6-carboxylysine modification is found at lysine 217. Histidine 219 is a binding site for substrate. Ni(2+) contacts are provided by histidine 246 and histidine 272. Histidine 320 (proton donor) is an active-site residue. Position 360 (aspartate 360) interacts with Ni(2+).

This sequence belongs to the metallo-dependent hydrolases superfamily. Urease alpha subunit family. As to quaternary structure, heterohexamer of 3 UreC (alpha) and 3 UreAB (gamma/beta) subunits. It depends on Ni cation as a cofactor. Post-translationally, carboxylation allows a single lysine to coordinate two nickel ions.

The protein resides in the cytoplasm. It catalyses the reaction urea + 2 H2O + H(+) = hydrogencarbonate + 2 NH4(+). It participates in nitrogen metabolism; urea degradation; CO(2) and NH(3) from urea (urease route): step 1/1. This Sulfurisphaera tokodaii (strain DSM 16993 / JCM 10545 / NBRC 100140 / 7) (Sulfolobus tokodaii) protein is Urease subunit alpha.